A 285-amino-acid chain; its full sequence is 4-diphosphocytidyl-2-C-methyl-D-erythritol kinase (285 aa).

Lysine 12 is a catalytic residue. 95-105 (PVGAGLAGGST) contacts ATP. Aspartate 137 is an active-site residue.

This sequence belongs to the GHMP kinase family. IspE subfamily.

It catalyses the reaction 4-CDP-2-C-methyl-D-erythritol + ATP = 4-CDP-2-C-methyl-D-erythritol 2-phosphate + ADP + H(+). It participates in isoprenoid biosynthesis; isopentenyl diphosphate biosynthesis via DXP pathway; isopentenyl diphosphate from 1-deoxy-D-xylulose 5-phosphate: step 3/6. In terms of biological role, catalyzes the phosphorylation of the position 2 hydroxy group of 4-diphosphocytidyl-2C-methyl-D-erythritol. This is 4-diphosphocytidyl-2-C-methyl-D-erythritol kinase from Syntrophomonas wolfei subsp. wolfei (strain DSM 2245B / Goettingen).